The primary structure comprises 337 residues: Histidine N-acetyltransferase (337 aa).

The propeptide at Met-1–Lys-2 is removed in mature form. The region spanning Leu-21–Glu-157 is the N-acetyltransferase domain.

Expressed exclusively in the brain and lens.

It catalyses the reaction L-histidine + acetyl-CoA = N(alpha)-acetyl-L-histidine + CoA + H(+). In terms of biological role, enzyme responsible for the N-acetyl-histidine (NAH) synthesis, which is a major constituent of brain and lens of ectothermic vertebrates. This chain is Histidine N-acetyltransferase (hisat), found in Oreochromis niloticus (Nile tilapia).